Consider the following 367-residue polypeptide: Cytochrome b (367 aa).

A run of 4 helical transmembrane segments spans residues 25–45 (FGSM…FLAI), 69–90 (WIMQ…YIHI), 105–125 (WLSG…GYVL), and 170–190 (FFAL…IHII). Heme b-binding residues include histidine 75 and histidine 89. Heme b-binding residues include histidine 174 and histidine 188. Histidine 193 contributes to the a ubiquinone binding site. 4 helical membrane-spanning segments follow: residues 218 to 238 (YKDV…MSFT), 280 to 300 (LGGT…PFTH), 312 to 332 (LTQA…WTAT), and 339 to 358 (FIFI…IINP).

It belongs to the cytochrome b family. The cytochrome bc1 complex contains 3 respiratory subunits (MT-CYB, CYC1 and UQCRFS1), 2 core proteins (UQCRC1 and UQCRC2) and probably 6 low-molecular weight proteins. The cofactor is heme b.

It localises to the mitochondrion inner membrane. In terms of biological role, component of the ubiquinol-cytochrome c reductase complex (complex III or cytochrome b-c1 complex) that is part of the mitochondrial respiratory chain. The b-c1 complex mediates electron transfer from ubiquinol to cytochrome c. Contributes to the generation of a proton gradient across the mitochondrial membrane that is then used for ATP synthesis. The chain is Cytochrome b (MT-CYB) from Austrelaps superbus (Lowland copperhead snake).